The sequence spans 53 residues: MIVLGWMLFVGLATYMGTFPEAMPPTLKWKERLPGQENKARRRIQALEEELLL.

Mitochondrial intermembrane-side segments run Met-1 to Trp-6 and Met-1 to Met-7. 2 helical membrane passes run Met-7 to Met-23 and Leu-8 to Pro-24. Cytoplasmic loops occupy residues Pro-24–Leu-53 and Pro-25–Ala-40.

Interacts with VDAC3. In terms of tissue distribution, testis specific. Detected only in germ cells at the step of spermiogenesis (at protein level). Expressed during the middle steps of spermatid development. As to expression, testis specific. Detected only in germ cells at the step of spermiogenesis (at protein level). Expressed in the late steps of spermatid development.

Its subcellular location is the mitochondrion outer membrane. In terms of biological role, regulates sperm development. May be involved in mitochondrial sheath formation. In Mus musculus (Mouse), this protein is Mitochondrial sheath formation-associated protein.